Reading from the N-terminus, the 525-residue chain is Neuropilin and tolloid-like protein 2 (525 aa).

The first 22 residues, 1 to 22, serve as a signal peptide directing secretion; the sequence is MALEQLCAVLKVLLITVLVVEG. At 23 to 347 the chain is on the extracellular side; sequence IAVAQKTQDG…GLFEQITKTH (325 aa). Cystine bridges form between Cys-45–Cys-72, Cys-100–Cys-122, Cys-177–Cys-207, Cys-234–Cys-256, Cys-297–Cys-309, Cys-304–Cys-322, and Cys-316–Cys-331. 2 CUB domains span residues 45–159 and 177–292; these read CGIW…YSFI and CQFE…FTSF. The region spanning 296-332 is the LDL-receptor class A domain; the sequence is PCTSSTFFCHSNMCINNSLVCNGVQNCAYPWDENHCK. Asn-311 carries N-linked (GlcNAc...) asparagine glycosylation. A helical membrane pass occupies residues 348–368; that stretch reads GTIIGITSGIVLVLLIISILV. Over 369–525 the chain is Cytoplasmic; it reads QVKQPRKKVM…SAQASISIDF (157 aa). A Phosphoserine modification is found at Ser-409.

Interacts with GRIK2 and GRIK3, but neither with AMPA-nor with NMDA-sensitive glutamate receptors. In terms of processing, N-glycosylated. As to expression, expressed in brain tissues, including cerebellar granule cells (at protein level).

The protein resides in the cell membrane. Its function is as follows. Accessory subunit of neuronal kainate-sensitive glutamate receptors, GRIK2 and GRIK3. Increases kainate-receptor channel activity, slowing the decay kinetics of the receptors, without affecting their expression at the cell surface, and increasing the open probability of the receptor channels. Modulates the agonist sensitivity of kainate receptors. Slows the decay of kainate receptor-mediated excitatory postsynaptic currents (EPSCs), thus directly influencing synaptic transmission. The sequence is that of Neuropilin and tolloid-like protein 2 (Neto2) from Mus musculus (Mouse).